The primary structure comprises 244 residues: Protein-L-isoaspartate O-methyltransferase (244 aa).

The segment at Met1–Glu39 is disordered. Ser92 is an active-site residue.

Belongs to the methyltransferase superfamily. L-isoaspartyl/D-aspartyl protein methyltransferase family.

It is found in the cytoplasm. It catalyses the reaction [protein]-L-isoaspartate + S-adenosyl-L-methionine = [protein]-L-isoaspartate alpha-methyl ester + S-adenosyl-L-homocysteine. Catalyzes the methyl esterification of L-isoaspartyl residues in peptides and proteins that result from spontaneous decomposition of normal L-aspartyl and L-asparaginyl residues. It plays a role in the repair and/or degradation of damaged proteins. The chain is Protein-L-isoaspartate O-methyltransferase from Synechococcus sp. (strain JA-2-3B'a(2-13)) (Cyanobacteria bacterium Yellowstone B-Prime).